A 264-amino-acid polypeptide reads, in one-letter code: Short chain dehydrogenase CPUR_05429 (264 aa).

NADP(+) is bound by residues isoleucine 24, aspartate 70, asparagine 97, and arginine 130. Catalysis depends on proton donor residues serine 146 and serine 147. Residues tyrosine 161, lysine 165, and threonine 196 each contribute to the NADP(+) site. The Proton acceptor role is filled by tyrosine 161. The active-site Lowers pKa of active site Tyr is the lysine 165.

It belongs to the short-chain dehydrogenases/reductases (SDR) family.

It functions in the pathway pigment biosynthesis. Short chain dehydrogenase; part of the ergochrome gene cluster responsible for the typical purple-black color of the ergot sclerotia. The ergochrome gene cluster produces several ergot pigments including the yellow ergochrome secalonic acid and its derivatives, as well as the red anthraquinones endocrocin and clavorubin. The pathway begins with the synthesis of atrochrysone thioester by the polyketide synthase (PKS) CPUR_05437. The atrochrysone carboxyl ACP thioesterase CPUR_05436 then breaks the thioester bond and releases the atrochrysone carboxylic acid from CPUR_05437. The atrochrysone carboxylic acid is then converted to atrochrysone which is further transformed into emodin anthrone. The next step is performed by the anthrone oxygenase CPUR_05434 that catalyzes the oxidation of emodinanthrone to emodin. Emodin is further modified to yield monodictyphenone via several steps involving CPUR_05427, CPUR_05428, CPUR_05429 and CPUR_05430. The short chain dehydrogenase/reductase CPUR_05418 then catalyzes the C-5 ketoreduction to give the xanthone skeleton of the monomeric units. Ergochromes formation requires further dimerization steps of different xanthone units, probably catalyzed by the cytochrome P450 monooxygenase CPUR_05419. CPUR_05425, CPUR_05426 and CPUR_05431 are unique to Claviceps, thus it is likely that they are involved in further modification of xanthone units or in their dimerization. The yellow ergochromes and the red anthraquinone pigments endocrocin and clavorubin are products from the same PKS derived precursors and the latter are likely shunt products in the pathway of xanthone biosynthesis. It is proposed that atrochrysone carboxylic acid released from the PKS CPUR_05437 can also be converted to endocrocin anthrone which is further oxidized into endocrocin by CPUR_05435. Endocrocin could be then modified to clavorubin, possibly by CPUR_05423 and CPUR_05431. Clavorubin is the principal anthraquinone metabolite produced by the cluster with a much higher yield compared to endocrocin. This Claviceps purpurea (strain 20.1) (Ergot fungus) protein is Short chain dehydrogenase CPUR_05429.